We begin with the raw amino-acid sequence, 980 residues long: MSSGCRSVGGSTWGNWRGDGGDLRQRRVLSPVCSAPAAGSWIGSQLGNVGNLLATPHPLGKPASSRVGTIVLACLLLFGSCVVRAVPTTPSPPTSTPTSMSTHSHGTVDPTLLPTETPDPLRLAVRESGILAEDGDFYTCPPPTGSTVVRIEPPRTCPKFDLGRNFTEGIAVIFKENIAPYKFRANVYYKDIVVTRVWKGYSHTSLSDRYNDRVPVSVEEIFGLIDSKGKCSSKAEYLRDNIMHHAYHDDEDEVELDLVPSKFATPGARAWQTTNDTTSYVGWMPWRHYTSTSVNCIVEEVEARSVYPYDSFALSTGDIVYASPFYGLRAAARIEHNSYAQDSFRQVEGYRPRDLDSKLQAEEPVTKNFITTPHVTVSWNWTEKKVEACTLTKWKEVDELVRDEFRGSYRFTIRSISSTFISNTTQFKLESAPLTECVSKEAKEAIDSIYKKQYESTHVFSGDVEYYLARGGFLIAFRPMLSNELARLYLNELVRSNRTYDLKNLLNPNANNNNNTTRRRRSLLSVPEPQPTQDGVHREQILHRLHKRAVEATAGTDSSNVTAKQLELIKTTSSIEFAMLQFAYDHIQSHVNEMLSRIATAWCTLQNKERTLWNEMVKINPSAIVSATLDERVAARVLGDVIAITHCAKIEGNVYLQNSMRSMDSNTCYSRPPVTFTITKNANNRGSIEGQLGEENEIFTERKLIEPCALNQKRYFKFGKEYVYYENYTFVRKVPPTEIEVISTYVELNLTLLEDREFLPLEVYTRAELEDTGLLDYSEIQRRNQLHALRFYDIDSVVNVDNTAVIMQGIASFFKGLGKVGEAVGTLVLAAAGAVVSTVSGIASFLNNPFGGLAIGLLVIAGLVAAFFAYRYVMQIRSNPMKALYPITTKALKNKAKTSYGQNEEDDGSDFDEAKLEEAREMIKYMSMVSALEKQEKKAIKKNSGVGLIASNVSKLALRRRGPKYTRLQQNDTMENEKMV.

Residues Met-1–Gly-14 are compositionally biased toward polar residues. Disordered stretches follow at residues Met-1–Gly-20 and Thr-88–Pro-118. Positions Met-1–Val-86 are cleaved as a signal peptide. The Virion surface portion of the chain corresponds to Pro-87–Pro-849. Positions Thr-96–Pro-118 are enriched in low complexity. 5 disulfides stabilise this stretch: Cys-140–Cys-647, Cys-157–Cys-603, Cys-231–Cys-296, Cys-389–Cys-437, and Cys-668–Cys-708. Residue Asn-165 is glycosylated (N-linked (GlcNAc...) asparagine; by host). The tract at residues Val-197–His-203 is involved in fusion and/or binding to host membrane. An N-linked (GlcNAc...) asparagine; by host glycan is attached at Asn-275. The involved in fusion and/or binding to host membrane stretch occupies residues Gly-282–Thr-290. N-linked (GlcNAc...) asparagine; by host glycans are attached at residues Asn-380, Asn-423, Asn-497, Asn-514, Asn-515, and Asn-560. The span at Leu-505–Thr-516 shows a compositional bias: low complexity. A disordered region spans residues Leu-505–Gly-535. Residues Asn-727 and Asn-749 are each glycosylated (N-linked (GlcNAc...) asparagine; by host). Hydrophobic membrane proximal region regions lie at residues Ile-794 to Asn-847 and Ala-823 to Ala-843. The chain crosses the membrane as a helical span at residues Phe-850–Tyr-870. At Arg-871–Val-980 the chain is on the intravirion side. Positions Tyr-925–Met-928 match the Golgi targeting motif. An Internalization motif motif is present at residues Tyr-965–Leu-968.

It belongs to the herpesviridae glycoprotein B family. As to quaternary structure, homotrimer; disulfide-linked. Binds to heparan sulfate proteoglycans. Interacts with gH/gL heterodimer. In terms of processing, a proteolytic cleavage by host furin generates two subunits that remain linked by disulfide bonds.

It is found in the virion membrane. The protein localises to the host cell membrane. Its subcellular location is the host endosome membrane. It localises to the host Golgi apparatus membrane. In terms of biological role, envelope glycoprotein that forms spikes at the surface of virion envelope. Essential for the initial attachment to heparan sulfate moieties of the host cell surface proteoglycans. Involved in fusion of viral and cellular membranes leading to virus entry into the host cell. Following initial binding to its host receptors, membrane fusion is mediated by the fusion machinery composed at least of gB and the heterodimer gH/gL. May be involved in the fusion between the virion envelope and the outer nuclear membrane during virion egress. This Equine herpesvirus 1 (strain AB1) (EHV-1) protein is Envelope glycoprotein B.